A 468-amino-acid polypeptide reads, in one-letter code: Putative ankyrin repeat protein R580 (468 aa).

ANK repeat units lie at residues 12 to 41, 189 to 218, 249 to 278, 336 to 365, 367 to 393, and 394 to 423; these read DYFDPINLSIKDGGEKTIDIIDCERYTLID, VINKSLNFASKSNMSELAIFLVDNGAEINC, CHFDLVEAVFNSGSLEMIETFIDFGMKINS, SFDNALVSTINAGKFKNAEYLLFSGANINF, NMPTNCMFKINFQTIKFLIDNNFDLEI, and HGTLILNKSLLNGYYDCANILIENGVKFSL.

The protein is Putative ankyrin repeat protein R580 of Acanthamoeba polyphaga (Amoeba).